The primary structure comprises 397 residues: Tryptophan synthase beta chain (397 aa).

Lys-88 is subject to N6-(pyridoxal phosphate)lysine.

The protein belongs to the TrpB family. Tetramer of two alpha and two beta chains. The cofactor is pyridoxal 5'-phosphate.

The catalysed reaction is (1S,2R)-1-C-(indol-3-yl)glycerol 3-phosphate + L-serine = D-glyceraldehyde 3-phosphate + L-tryptophan + H2O. Its pathway is amino-acid biosynthesis; L-tryptophan biosynthesis; L-tryptophan from chorismate: step 5/5. Functionally, the beta subunit is responsible for the synthesis of L-tryptophan from indole and L-serine. This Haemophilus influenzae (strain PittEE) protein is Tryptophan synthase beta chain.